We begin with the raw amino-acid sequence, 116 residues long: Large ribosomal subunit protein bL19 (116 aa).

It belongs to the bacterial ribosomal protein bL19 family.

Its function is as follows. This protein is located at the 30S-50S ribosomal subunit interface and may play a role in the structure and function of the aminoacyl-tRNA binding site. The chain is Large ribosomal subunit protein bL19 from Ectopseudomonas mendocina (strain ymp) (Pseudomonas mendocina).